The sequence spans 320 residues: Acetyl-coenzyme A carboxylase carboxyl transferase subunit alpha (320 aa).

The region spanning 33-294 is the CoA carboxyltransferase C-terminal domain; it reads AFDGEIESLR…GDAVEEELKA (262 aa).

Belongs to the AccA family. As to quaternary structure, acetyl-CoA carboxylase is a heterohexamer composed of biotin carboxyl carrier protein (AccB), biotin carboxylase (AccC) and two subunits each of ACCase subunit alpha (AccA) and ACCase subunit beta (AccD).

Its subcellular location is the cytoplasm. It carries out the reaction N(6)-carboxybiotinyl-L-lysyl-[protein] + acetyl-CoA = N(6)-biotinyl-L-lysyl-[protein] + malonyl-CoA. It participates in lipid metabolism; malonyl-CoA biosynthesis; malonyl-CoA from acetyl-CoA: step 1/1. Its function is as follows. Component of the acetyl coenzyme A carboxylase (ACC) complex. First, biotin carboxylase catalyzes the carboxylation of biotin on its carrier protein (BCCP) and then the CO(2) group is transferred by the carboxyltransferase to acetyl-CoA to form malonyl-CoA. The polypeptide is Acetyl-coenzyme A carboxylase carboxyl transferase subunit alpha (Phenylobacterium zucineum (strain HLK1)).